The chain runs to 220 residues: Deoxyribose-phosphate aldolase (220 aa).

Aspartate 92 serves as the catalytic Proton donor/acceptor. The active-site Schiff-base intermediate with acetaldehyde is the lysine 155. The active-site Proton donor/acceptor is lysine 184.

This sequence belongs to the DeoC/FbaB aldolase family. DeoC type 1 subfamily.

It is found in the cytoplasm. It catalyses the reaction 2-deoxy-D-ribose 5-phosphate = D-glyceraldehyde 3-phosphate + acetaldehyde. The protein operates within carbohydrate degradation; 2-deoxy-D-ribose 1-phosphate degradation; D-glyceraldehyde 3-phosphate and acetaldehyde from 2-deoxy-alpha-D-ribose 1-phosphate: step 2/2. Its function is as follows. Catalyzes a reversible aldol reaction between acetaldehyde and D-glyceraldehyde 3-phosphate to generate 2-deoxy-D-ribose 5-phosphate. The protein is Deoxyribose-phosphate aldolase of Symbiobacterium thermophilum (strain DSM 24528 / JCM 14929 / IAM 14863 / T).